The sequence spans 180 residues: Secreted RxLR effector protein 5 (180 aa).

An N-terminal signal peptide occupies residues 1–24; the sequence is MRFYYTLLATAAALLVHSDALSAA. Residues 44–60 carry the RxLR-dEER motif; the sequence is RFLRRHTDSETTDNEER.

The protein belongs to the RxLR effector family.

The protein localises to the secreted. The protein resides in the host cell. Its function is as follows. Secreted effector that partially suppresses elicitor-induced cell death in host and enhances virulence of P.parasitica. The protein is Secreted RxLR effector protein 5 of Phytophthora nicotianae (Potato buckeye rot agent).